Consider the following 559-residue polypeptide: 2-succinyl-5-enolpyruvyl-6-hydroxy-3-cyclohexene-1-carboxylate synthase (559 aa).

It belongs to the TPP enzyme family. MenD subfamily. As to quaternary structure, homodimer. The cofactor is Mg(2+). It depends on Mn(2+) as a cofactor. Requires thiamine diphosphate as cofactor.

It carries out the reaction isochorismate + 2-oxoglutarate + H(+) = 5-enolpyruvoyl-6-hydroxy-2-succinyl-cyclohex-3-ene-1-carboxylate + CO2. It functions in the pathway quinol/quinone metabolism; 1,4-dihydroxy-2-naphthoate biosynthesis; 1,4-dihydroxy-2-naphthoate from chorismate: step 2/7. Its pathway is quinol/quinone metabolism; menaquinone biosynthesis. Its function is as follows. Catalyzes the thiamine diphosphate-dependent decarboxylation of 2-oxoglutarate and the subsequent addition of the resulting succinic semialdehyde-thiamine pyrophosphate anion to isochorismate to yield 2-succinyl-5-enolpyruvyl-6-hydroxy-3-cyclohexene-1-carboxylate (SEPHCHC). In Edwardsiella ictaluri (strain 93-146), this protein is 2-succinyl-5-enolpyruvyl-6-hydroxy-3-cyclohexene-1-carboxylate synthase.